The sequence spans 1792 residues: D-lysergyl-peptide-synthetase subunit 3 (1792 aa).

Residues 239 to 642 form an adenylation (A) domain region; that stretch reads FRQRCDLHPN…GRKDSQIKIR (404 aa). The region spanning 779 to 853 is the Carrier domain; that stretch reads SNEEHRLQRM…DLARKASQSV (75 aa). O-(pantetheine 4'-phosphoryl)serine is present on Ser-813. A condensation (C) domain region spans residues 895–1285; sequence EDIYPCTPMQ…HILGQIHGKE (391 aa). A reductase (R) domain region spans residues 1415–1640; it reads VTGANGFIGT…AGEFNSSAGS (226 aa).

It belongs to the NRP synthetase family.

It functions in the pathway alkaloid biosynthesis; ergot alkaloid biosynthesis. Functionally, D-lysergyl-peptide-synthetase subunit 3; part of the gene cluster that mediates the biosynthesis of fungal ergot alkaloid. DmaW catalyzes the first step of ergot alkaloid biosynthesis by condensing dimethylallyl diphosphate (DMAP) and tryptophan to form 4-dimethylallyl-L-tryptophan. The second step is catalyzed by the methyltransferase easF that methylates 4-dimethylallyl-L-tryptophan in the presence of S-adenosyl-L-methionine, resulting in the formation of 4-dimethylallyl-L-abrine. The catalase easC and the FAD-dependent oxidoreductase easE then transform 4-dimethylallyl-L-abrine to chanoclavine-I which is further oxidized by easD in the presence of NAD(+), resulting in the formation of chanoclavine-I aldehyde. Agroclavine dehydrogenase easG then mediates the conversion of chanoclavine-I aldehyde to agroclavine via a non-enzymatic adduct reaction: the substrate is an iminium intermediate that is formed spontaneously from chanoclavine-I aldehyde in the presence of glutathione. The presence of easA is not required to complete this reaction. Further conversion of agroclavine to paspalic acid is a two-step process involving oxidation of agroclavine to elymoclavine and of elymoclavine to paspalic acid, the second step being performed by the elymoclavine oxidase cloA. Paspalic acid is then further converted to D-lysergic acid. Ergopeptines are assembled from D-lysergic acid and three different amino acids by the D-lysergyl-peptide-synthetases composed each of a monomudular and a trimodular nonribosomal peptide synthetase subunit. LpsB and lpsC encode the monomodular subunits responsible for D-lysergic acid activation and incorporation into the ergopeptine backbone. LpsA1 and A2 subunits encode the trimodular nonribosomal peptide synthetase assembling the tripeptide portion of ergopeptines. LpsA1 is responsible for formation of the major ergopeptine, ergotamine, and lpsA2 for alpha-ergocryptine, the minor ergopeptine of the total alkaloid mixture elaborated by C.purpurea. D-lysergyl-tripeptides are assembled by the nonribosomal peptide synthetases and released as N-(D-lysergyl-aminoacyl)-lactams. Cyclolization of the D-lysergyl-tripeptides is performed by the Fe(2+)/2-ketoglutarate-dependent dioxygenase easH which introduces a hydroxyl group into N-(D-lysergyl-aminoacyl)-lactam at alpha-C of the aminoacyl residue followed by spontaneous condensation with the terminal lactam carbonyl group. This is D-lysergyl-peptide-synthetase subunit 3 from Claviceps purpurea (strain 20.1) (Ergot fungus).